Reading from the N-terminus, the 53-residue chain is UPF0391 membrane protein ETA_06630 (53 aa).

2 helical membrane passes run Trp-4–Ala-24 and Ala-27–Phe-47.

It belongs to the UPF0391 family.

The protein localises to the cell membrane. The chain is UPF0391 membrane protein ETA_06630 from Erwinia tasmaniensis (strain DSM 17950 / CFBP 7177 / CIP 109463 / NCPPB 4357 / Et1/99).